Here is a 217-residue protein sequence, read N- to C-terminus: Small ribosomal subunit protein uS3 (217 aa).

The KH type-2 domain maps to 38–106 (IRKYIDNALQ…KVHINVIEIK (69 aa)).

Belongs to the universal ribosomal protein uS3 family. In terms of assembly, part of the 30S ribosomal subunit. Forms a tight complex with proteins S10 and S14.

In terms of biological role, binds the lower part of the 30S subunit head. Binds mRNA in the 70S ribosome, positioning it for translation. This is Small ribosomal subunit protein uS3 from Staphylococcus saprophyticus subsp. saprophyticus (strain ATCC 15305 / DSM 20229 / NCIMB 8711 / NCTC 7292 / S-41).